Here is a 481-residue protein sequence, read N- to C-terminus: Inosine-5'-monophosphate dehydrogenase (481 aa).

CBS domains are found at residues 92–148 and 152–209; these read VIND…SKKV and MTKM…PEAN. Residues aspartate 244 and 293-295 each bind NAD(+); that span reads GIG. The K(+) site is built by glycine 295 and glycine 297. Serine 298 is an IMP binding site. Cysteine 300 is a binding site for K(+). The active-site Thioimidate intermediate is cysteine 300. Residues 333-335, 356-357, and 380-384 each bind IMP; these read DGG, GS, and YRGMG. The Proton acceptor role is filled by arginine 396. An IMP-binding site is contributed by glutamate 410. Positions 464, 465, and 466 each coordinate K(+).

Belongs to the IMPDH/GMPR family. In terms of assembly, homotetramer. The cofactor is K(+).

It catalyses the reaction IMP + NAD(+) + H2O = XMP + NADH + H(+). It participates in purine metabolism; XMP biosynthesis via de novo pathway; XMP from IMP: step 1/1. With respect to regulation, mycophenolic acid (MPA) is a non-competitive inhibitor that prevents formation of the closed enzyme conformation by binding to the same site as the amobile flap. In contrast, mizoribine monophosphate (MZP) is a competitive inhibitor that induces the closed conformation. MPA is a potent inhibitor of mammalian IMPDHs but a poor inhibitor of the bacterial enzymes. MZP is a more potent inhibitor of bacterial IMPDH. In terms of biological role, catalyzes the conversion of inosine 5'-phosphate (IMP) to xanthosine 5'-phosphate (XMP), the first committed and rate-limiting step in the de novo synthesis of guanine nucleotides, and therefore plays an important role in the regulation of cell growth. This Helicobacter pylori (strain J99 / ATCC 700824) (Campylobacter pylori J99) protein is Inosine-5'-monophosphate dehydrogenase.